Here is a 168-residue protein sequence, read N- to C-terminus: Photosystem I assembly protein Ycf3 (168 aa).

TPR repeat units follow at residues 35–68 (AFTYYRDGMSAQSEGNYAEALQNYYEATRLEIDP), 72–105 (SYILYNIGLIHTSNGEHTKALEYYFRAIERNPFL), and 120–153 (GEQAIRQGDSEIAEAWSDQAAEYWKQAIALTPGN).

Belongs to the Ycf3 family.

The protein localises to the plastid. Its subcellular location is the chloroplast thylakoid membrane. Essential for the assembly of the photosystem I (PSI) complex. May act as a chaperone-like factor to guide the assembly of the PSI subunits. This Calycanthus floridus var. glaucus (Eastern sweetshrub) protein is Photosystem I assembly protein Ycf3.